Here is a 96-residue protein sequence, read N- to C-terminus: Aspartyl/glutamyl-tRNA(Asn/Gln) amidotransferase subunit C (96 aa).

Belongs to the GatC family. As to quaternary structure, heterotrimer of A, B and C subunits.

The enzyme catalyses L-glutamyl-tRNA(Gln) + L-glutamine + ATP + H2O = L-glutaminyl-tRNA(Gln) + L-glutamate + ADP + phosphate + H(+). The catalysed reaction is L-aspartyl-tRNA(Asn) + L-glutamine + ATP + H2O = L-asparaginyl-tRNA(Asn) + L-glutamate + ADP + phosphate + 2 H(+). Allows the formation of correctly charged Asn-tRNA(Asn) or Gln-tRNA(Gln) through the transamidation of misacylated Asp-tRNA(Asn) or Glu-tRNA(Gln) in organisms which lack either or both of asparaginyl-tRNA or glutaminyl-tRNA synthetases. The reaction takes place in the presence of glutamine and ATP through an activated phospho-Asp-tRNA(Asn) or phospho-Glu-tRNA(Gln). The protein is Aspartyl/glutamyl-tRNA(Asn/Gln) amidotransferase subunit C of Exiguobacterium sibiricum (strain DSM 17290 / CCUG 55495 / CIP 109462 / JCM 13490 / 255-15).